A 266-amino-acid chain; its full sequence is Gasdermin bGSDM (266 aa).

Cys-4 is lipidated: S-palmitoyl cysteine. Transmembrane regions (beta stranded) follow at residues 69–85 (INGQ…GINI), 97–114 (AGIE…FEFS), 163–180 (EFTV…QLDV), and 189–205 (GKLK…TVTY). The interval 238–266 (AMALDAAGGVMPSDSALLDEGGLLDLEGF) is C-terminal region.

The protein belongs to the bacterial gasdermin family. As to quaternary structure, monomer in solution. Homooligomer; forms homooligomeric ring-shaped pores when inserted in membranes with 48-54 subunits per ring. Palmitoylation helps stabilize the inactive state; may self palmitoylate. Palmitoylation plays a significant role in pore formation.

The protein localises to the cytoplasm. It localises to the cell inner membrane. Its activity is regulated as follows. The full-length protein before cleavage is inactive: intramolecular interactions between the N-terminal domain and the C-terminal region as well as the lipid modification, mediate autoinhibition. The pyroptosis-like-inducing activity is carried by the released N-terminal domain (Gasdermin bGSDM, N-terminus). Precursor of a pore-forming protein involved in defense against bacteriophages. Expression of bGSDM and the neighboring protease gene (Ga0334635_1659) is toxic in E.coli. Cleavage of this precursor by its dedicated protease releases the active moiety (gasdermin bGSDM, N-terminus) which inserts into membranes, forming pores and triggering cell death. Its function is as follows. Pore-forming protein that causes membrane permeabilization, probably via a pyroptosis-like activity. Makes ring-like pores with an interior pore diameter of 200-300 Angstroms, when integrated in liposomes. The protein is Gasdermin bGSDM of Vitiosangium sp. (strain GDMCC 1.1324).